A 286-amino-acid chain; its full sequence is Energy-coupling factor transporter ATP-binding protein EcfA2 (286 aa).

In terms of domain architecture, ABC transporter spans 3–245 (IKIENLTYTY…IDTLEKVGLA (243 aa)). 40–47 (GHTGSGKS) provides a ligand contact to ATP.

The protein belongs to the ABC transporter superfamily. Energy-coupling factor EcfA family. As to quaternary structure, forms a stable energy-coupling factor (ECF) transporter complex composed of 2 membrane-embedded substrate-binding proteins (S component), 2 ATP-binding proteins (A component) and 2 transmembrane proteins (T component).

Its subcellular location is the cell membrane. Its function is as follows. ATP-binding (A) component of a common energy-coupling factor (ECF) ABC-transporter complex. Unlike classic ABC transporters this ECF transporter provides the energy necessary to transport a number of different substrates. In Clostridium acetobutylicum (strain ATCC 824 / DSM 792 / JCM 1419 / IAM 19013 / LMG 5710 / NBRC 13948 / NRRL B-527 / VKM B-1787 / 2291 / W), this protein is Energy-coupling factor transporter ATP-binding protein EcfA2.